The sequence spans 452 residues: Na(+)/H(+) antiporter NhaA (452 aa).

Helical transmembrane passes span 23-43, 71-91, 108-128, 136-156, 165-185, 189-209, 216-236, 316-336, 349-369, 385-405, and 418-438; these read MMLF…LSTI, LLQF…GLEI, LPIV…LLVV, GAAI…AVLG, VFLT…IALF, HINI…YLMG, LGLY…SGIH, IVGY…TLGG, VFLG…YGFV, LMAV…IATL, and EAKL…IVTL.

Belongs to the NhaA Na(+)/H(+) (TC 2.A.33) antiporter family.

It localises to the cell inner membrane. The catalysed reaction is Na(+)(in) + 2 H(+)(out) = Na(+)(out) + 2 H(+)(in). In terms of biological role, na(+)/H(+) antiporter that extrudes sodium in exchange for external protons. The protein is Na(+)/H(+) antiporter NhaA of Porphyromonas gingivalis (strain ATCC BAA-308 / W83).